Here is a 277-residue protein sequence, read N- to C-terminus: Phosphate import ATP-binding protein PstB 2 (277 aa).

The region spanning 31–272 (IEVPGLNLFY…PAKKQTEDYI (242 aa)) is the ABC transporter domain. ATP is bound at residue 63 to 70 (GPSGCGKS).

Belongs to the ABC transporter superfamily. Phosphate importer (TC 3.A.1.7) family. In terms of assembly, the complex is composed of two ATP-binding proteins (PstB), two transmembrane proteins (PstC and PstA) and a solute-binding protein (PstS).

It localises to the cell inner membrane. The catalysed reaction is phosphate(out) + ATP + H2O = ADP + 2 phosphate(in) + H(+). Part of the ABC transporter complex PstSACB involved in phosphate import. Responsible for energy coupling to the transport system. This chain is Phosphate import ATP-binding protein PstB 2, found in Pseudomonas savastanoi pv. phaseolicola (strain 1448A / Race 6) (Pseudomonas syringae pv. phaseolicola (strain 1448A / Race 6)).